A 732-amino-acid polypeptide reads, in one-letter code: Alpha-galactosidase Mel36A (732 aa).

Substrate is bound by residues 370-371 (DD), Trp415, Arg447, 480-484 (KWDMN), 530-533 (CSGG), and Asp552. Asp482 functions as the Nucleophile in the catalytic mechanism. The Proton donor role is filled by Asp552.

Belongs to the glycosyl hydrolase 36 family. Homotetramer.

It carries out the reaction Hydrolysis of terminal, non-reducing alpha-D-galactose residues in alpha-D-galactosides, including galactose oligosaccharides, galactomannans and galactolipids.. Hydrolyzes the short-chain alpha-galactosaccharide raffinose. In Lactobacillus acidophilus (strain ATCC 700396 / NCK56 / N2 / NCFM), this protein is Alpha-galactosidase Mel36A.